The sequence spans 213 residues: Uracil phosphoribosyltransferase (213 aa).

5-phospho-alpha-D-ribose 1-diphosphate contacts are provided by residues Arg78, Arg103, and 131–139; that span reads DPMLATGGT. Residues Ile197 and 202-204 each bind uracil; that span reads GDA. Asp203 is a binding site for 5-phospho-alpha-D-ribose 1-diphosphate.

It belongs to the UPRTase family. The cofactor is Mg(2+).

It catalyses the reaction UMP + diphosphate = 5-phospho-alpha-D-ribose 1-diphosphate + uracil. It participates in pyrimidine metabolism; UMP biosynthesis via salvage pathway; UMP from uracil: step 1/1. Its activity is regulated as follows. Allosterically activated by GTP. In terms of biological role, catalyzes the conversion of uracil and 5-phospho-alpha-D-ribose 1-diphosphate (PRPP) to UMP and diphosphate. The sequence is that of Uracil phosphoribosyltransferase from Bifidobacterium animalis subsp. lactis (strain AD011).